The primary structure comprises 217 residues: Pro-Pro endopeptidase (217 aa).

The N-terminal stretch at Met-1–Ala-27 is a signal peptide. The ATLF-like domain occupies Gln-30–Ala-216. The plays a crucial role in substrate specificity stretch occupies residues Ser-112 to Val-115. Zn(2+) is bound at residue His-137. Glu-138 acts as the Proton acceptor in catalysis. 3 residues coordinate Zn(2+): His-141, Tyr-174, and Glu-181.

Belongs to the peptidase M34 family. Pro-Pro endopeptidase subfamily. In terms of assembly, monomer. Zn(2+) is required as a cofactor.

The protein localises to the secreted. It catalyses the reaction The enzyme catalyzes the hydrolytic cleavage of peptide bonds between two proline residues.. In terms of biological role, zinc-dependent endoprotease with a unique preference for proline residues surrounding the scissile bond, which cleaves in a PLP-|-PVP motif. Cleaves the cell surface protein encoded by an adjacent gene, which contains two PPEP-2 cleaving sites and putative extracellular matrix-binding domains. Thereby, may have a role in the regulation of P.alvei adhesion. Is not able to cleave within the PVP-|-PVQ motif, and only shows a very poor cleavage of the VNP-|-PVP motif in vitro, which is the optimal substrate peptide for PPEP-1 from P.difficile. This is Pro-Pro endopeptidase from Paenibacillus alvei (strain ATCC 6344 / DSM 29 / NBRC 3343 / NCIMB 9371 / NCTC 6352) (Bacillus alvei).